Consider the following 421-residue polypeptide: Serine--tRNA ligase (421 aa).

229 to 231 (TAE) is an L-serine binding site. ATP is bound at residue 260-262 (RSE). Glutamate 283 serves as a coordination point for L-serine. An ATP-binding site is contributed by 347–350 (EISS). Serine 382 is a binding site for L-serine.

It belongs to the class-II aminoacyl-tRNA synthetase family. Type-1 seryl-tRNA synthetase subfamily. Homodimer. The tRNA molecule binds across the dimer.

The protein resides in the cytoplasm. The catalysed reaction is tRNA(Ser) + L-serine + ATP = L-seryl-tRNA(Ser) + AMP + diphosphate + H(+). The enzyme catalyses tRNA(Sec) + L-serine + ATP = L-seryl-tRNA(Sec) + AMP + diphosphate + H(+). Its pathway is aminoacyl-tRNA biosynthesis; selenocysteinyl-tRNA(Sec) biosynthesis; L-seryl-tRNA(Sec) from L-serine and tRNA(Sec): step 1/1. In terms of biological role, catalyzes the attachment of serine to tRNA(Ser). Is also able to aminoacylate tRNA(Sec) with serine, to form the misacylated tRNA L-seryl-tRNA(Sec), which will be further converted into selenocysteinyl-tRNA(Sec). The chain is Serine--tRNA ligase from Symbiobacterium thermophilum (strain DSM 24528 / JCM 14929 / IAM 14863 / T).